The sequence spans 317 residues: SWI/SNF-related matrix-associated actin-dependent regulator of chromatin subfamily E member 1-related (317 aa).

The span at 1 to 22 shows a compositional bias: low complexity; it reads MSHGPKQPGAASAPASGKAPGQ. The segment at 1–71 is disordered; it reads MSHGPKQPGA…RKKILPNGPK (71 aa). K31 is covalently cross-linked (Glycyl lysine isopeptide (Lys-Gly) (interchain with G-Cter in SUMO2)). Residues 31-52 are compositionally biased toward basic and acidic residues; the sequence is KQERGEGPRAGEKGSHEEEPVK. A compositionally biased stretch (basic residues) spans 53–65; sequence KRGWPKGKKRKKI. Residues 70 to 138 constitute a DNA-binding region (HMG box); sequence PKAPVTGYVR…QYMKELRAYQ (69 aa). S160 is subject to Phosphoserine. The stretch at 190-257 forms a coiled coil; it reads EEFLDQNKAR…LQQQLQAVRQ (68 aa).

As to quaternary structure, component of a BHC histone deacetylase complex that contains HDAC1, HDAC2, HMG20B/BRAF35, KDM1A, RCOR1/CoREST and PHF21A/BHC80. The BHC complex may also contain ZMYM2, ZNF217, ZMYM3, GSE1 and GTF2I. Interacts with the BRCA2 tumor suppressor protein.

The protein resides in the nucleus. The protein localises to the chromosome. Required for correct progression through G2 phase of the cell cycle and entry into mitosis. Required for RCOR1/CoREST mediated repression of neuronal specific gene promoters. The chain is SWI/SNF-related matrix-associated actin-dependent regulator of chromatin subfamily E member 1-related (HMG20B) from Bos taurus (Bovine).